We begin with the raw amino-acid sequence, 536 residues long: Chaperonin GroEL 2 (536 aa).

ATP-binding positions include 29–32 (TLGP), Lys-50, Gly-416, and Asp-497.

The protein belongs to the chaperonin (HSP60) family. As to quaternary structure, forms a cylinder of 14 subunits composed of two heptameric rings stacked back-to-back. Interacts with the co-chaperonin GroES.

It is found in the cytoplasm. The enzyme catalyses ATP + H2O + a folded polypeptide = ADP + phosphate + an unfolded polypeptide.. Its function is as follows. Together with its co-chaperonin GroES, plays an essential role in assisting protein folding. The GroEL-GroES system forms a nano-cage that allows encapsulation of the non-native substrate proteins and provides a physical environment optimized to promote and accelerate protein folding. The chain is Chaperonin GroEL 2 from Chlamydia caviae (strain ATCC VR-813 / DSM 19441 / 03DC25 / GPIC) (Chlamydophila caviae).